Here is a 78-residue protein sequence, read N- to C-terminus: Acyl carrier protein (78 aa).

The region spanning 2 to 77 (STIEERVKKI…AAIDYILSHQ (76 aa)) is the Carrier domain. An O-(pantetheine 4'-phosphoryl)serine modification is found at serine 37.

The protein belongs to the acyl carrier protein (ACP) family. Post-translationally, 4'-phosphopantetheine is transferred from CoA to a specific serine of apo-ACP by AcpS. This modification is essential for activity because fatty acids are bound in thioester linkage to the sulfhydryl of the prosthetic group.

The protein resides in the cytoplasm. It functions in the pathway lipid metabolism; fatty acid biosynthesis. In terms of biological role, carrier of the growing fatty acid chain in fatty acid biosynthesis. The polypeptide is Acyl carrier protein (Tolumonas auensis (strain DSM 9187 / NBRC 110442 / TA 4)).